The sequence spans 322 residues: Phosphatidylserine decarboxylase proenzyme (322 aa).

Residues Asp90, His147, and Ser254 each act as charge relay system; for autoendoproteolytic cleavage activity in the active site. Ser254 serves as the catalytic Schiff-base intermediate with substrate; via pyruvic acid; for decarboxylase activity. Ser254 carries the pyruvic acid (Ser); by autocatalysis modification. A disordered region spans residues 297 to 322; sequence PAPLPAEEIKAEHDASPLVDNKKDDT. The segment covering 303–322 has biased composition (basic and acidic residues); it reads EEIKAEHDASPLVDNKKDDT.

This sequence belongs to the phosphatidylserine decarboxylase family. PSD-B subfamily. Prokaryotic type I sub-subfamily. Heterodimer of a large membrane-associated beta subunit and a small pyruvoyl-containing alpha subunit. Pyruvate serves as cofactor. In terms of processing, is synthesized initially as an inactive proenzyme. Formation of the active enzyme involves a self-maturation process in which the active site pyruvoyl group is generated from an internal serine residue via an autocatalytic post-translational modification. Two non-identical subunits are generated from the proenzyme in this reaction, and the pyruvate is formed at the N-terminus of the alpha chain, which is derived from the carboxyl end of the proenzyme. The autoendoproteolytic cleavage occurs by a canonical serine protease mechanism, in which the side chain hydroxyl group of the serine supplies its oxygen atom to form the C-terminus of the beta chain, while the remainder of the serine residue undergoes an oxidative deamination to produce ammonia and the pyruvoyl prosthetic group on the alpha chain. During this reaction, the Ser that is part of the protease active site of the proenzyme becomes the pyruvoyl prosthetic group, which constitutes an essential element of the active site of the mature decarboxylase.

The protein localises to the cell membrane. The enzyme catalyses a 1,2-diacyl-sn-glycero-3-phospho-L-serine + H(+) = a 1,2-diacyl-sn-glycero-3-phosphoethanolamine + CO2. Its pathway is phospholipid metabolism; phosphatidylethanolamine biosynthesis; phosphatidylethanolamine from CDP-diacylglycerol: step 2/2. Catalyzes the formation of phosphatidylethanolamine (PtdEtn) from phosphatidylserine (PtdSer). The chain is Phosphatidylserine decarboxylase proenzyme from Salmonella typhi.